Reading from the N-terminus, the 183-residue chain is Ferritin heavy chain (183 aa).

Methionine 1 carries the post-translational modification N-acetylmethionine. Threonine 2 is subject to N-acetylthreonine; in Ferritin heavy chain, N-terminally processed. The Ferritin-like diiron domain occupies 11–160 (QNYHQDSEAA…DHVTNLRKMG (150 aa)). Residues glutamate 28, glutamate 63, histidine 66, glutamate 108, and glutamine 142 each coordinate Fe cation. Phosphoserine occurs at positions 179 and 183.

The protein belongs to the ferritin family. Oligomer of 24 subunits. There are two types of subunits: L (light) chain and H (heavy) chain. The major chain can be light or heavy, depending on the species and tissue type. The functional molecule forms a roughly spherical shell with a diameter of 12 nm and contains a central cavity into which the insoluble mineral iron core is deposited. Interacts with NCOA4; NCOA4 promotes targeting of the iron-binding ferritin complex to autolysosomes following starvation or iron depletion.

Its subcellular location is the cytoplasm. It localises to the lysosome. The protein resides in the cytoplasmic vesicle. It is found in the autophagosome. It carries out the reaction 4 Fe(2+) + O2 + 4 H(+) = 4 Fe(3+) + 2 H2O. Its function is as follows. Stores iron in a soluble, non-toxic, readily available form. Important for iron homeostasis. Has ferroxidase activity. Iron is taken up in the ferrous form and deposited as ferric hydroxides after oxidation. Also plays a role in delivery of iron to cells. Mediates iron uptake in capsule cells of the developing kidney. Delivery to lysosomes is mediated by the cargo receptor NCOA4 for autophagic degradation and release of iron. The polypeptide is Ferritin heavy chain (FTH1) (Felis catus (Cat)).